The primary structure comprises 187 residues: GTP cyclohydrolase 1 (187 aa).

The Zn(2+) site is built by C76, H79, and C148.

It belongs to the GTP cyclohydrolase I family. As to quaternary structure, toroid-shaped homodecamer, composed of two pentamers of five dimers.

It catalyses the reaction GTP + H2O = 7,8-dihydroneopterin 3'-triphosphate + formate + H(+). It functions in the pathway cofactor biosynthesis; 7,8-dihydroneopterin triphosphate biosynthesis; 7,8-dihydroneopterin triphosphate from GTP: step 1/1. In Streptococcus agalactiae serotype V (strain ATCC BAA-611 / 2603 V/R), this protein is GTP cyclohydrolase 1.